The chain runs to 459 residues: Ribulose bisphosphate carboxylase (459 aa).

Asn-111 provides a ligand contact to substrate. Lys-166 serves as the catalytic Proton acceptor. Lys-168 serves as a coordination point for substrate. Mg(2+) contacts are provided by Lys-191, Asp-193, and Glu-194. Residue Lys-191 is modified to N6-carboxylysine. The active-site Proton acceptor is the His-287. Arg-288, His-321, and Ser-368 together coordinate substrate.

The protein belongs to the RuBisCO large chain family. Type II subfamily. In terms of assembly, homodimer. Requires Mg(2+) as cofactor.

It carries out the reaction 2 (2R)-3-phosphoglycerate + 2 H(+) = D-ribulose 1,5-bisphosphate + CO2 + H2O. The enzyme catalyses D-ribulose 1,5-bisphosphate + O2 = 2-phosphoglycolate + (2R)-3-phosphoglycerate + 2 H(+). Functionally, ruBisCO catalyzes two reactions: the carboxylation of D-ribulose 1,5-bisphosphate, the primary event in carbon dioxide fixation, as well as the oxidative fragmentation of the pentose substrate. Both reactions occur simultaneously and in competition at the same active site. The polypeptide is Ribulose bisphosphate carboxylase (Cereibacter sphaeroides (strain ATCC 17029 / ATH 2.4.9) (Rhodobacter sphaeroides)).